A 120-amino-acid chain; its full sequence is uncharacterized protein (120 aa).

An N-terminal signal peptide occupies residues 1–22; the sequence is MSTSGMLFIFATFCPCFLSCCA. Residues 23 to 59 lie on the Extracellular side of the membrane; that stretch reads FMSHWKLKDFSFRFLRMCGERSLVVCYPLKLLKQIRS. A helical transmembrane segment spans residues 60-80; that stretch reads LFSIAIGHLSLMLIEGSANLL. The Cytoplasmic segment spans residues 81-120; sequence SLEEISRTLLRILDFVGNKNMRTYLEVPLCRWHISQARPN.

The protein resides in the membrane. This is an uncharacterized protein from Schizosaccharomyces pombe (strain 972 / ATCC 24843) (Fission yeast).